The primary structure comprises 254 residues: Hydrolase tropI (254 aa).

Residues cysteine 141, aspartate 187, and histidine 219 contribute to the active site.

It belongs to the dienelactone hydrolase family.

It functions in the pathway secondary metabolite biosynthesis. Its function is as follows. Hydrolase; part of the gene cluster that mediates the biosynthesis of the tropolone class of fungal maleic anhydrides. The pathway begins with the synthesis of 3-methylorcinaldehyde by the non-reducing polyketide synthase (PKS) tropA. 3-methylorcinaldehyde is the substrate for the FAD-dependent monooxygenase tropB to yield a dearomatized hydroxycyclohexadione. The 2-oxoglutarate-dependent dioxygenase tropC then performs the oxidative ring expansion to provide the first tropolone metabolite stipitaldehyde. Trop D converts stipitaldehyde into stipitacetal which is in turn converted to stipitalide by the short-chain dehydrogenase/reductase tropE. The next steps involve tropF, tropG, tropH, tropI and tropJ to form successive tropolone maleic anhydrides including stipitaldehydic, stipitatonic and stipitatic acids. The protein is Hydrolase tropI of Talaromyces stipitatus (strain ATCC 10500 / CBS 375.48 / QM 6759 / NRRL 1006) (Penicillium stipitatum).